Reading from the N-terminus, the 89-residue chain is RNA-binding protein Hfq (89 aa).

Residues 9-68 (EPFLNALRKEKVPVSIYLVNGIKLQGQIESFDQFVILLRNNVNQMVYKHAISTVVPARNV) form the Sm domain. The interval 70-89 (TAPPVPTETHAQSSEEFGNI) is disordered. Positions 78–89 (THAQSSEEFGNI) are enriched in polar residues.

This sequence belongs to the Hfq family. As to quaternary structure, homohexamer.

In terms of biological role, RNA chaperone that binds small regulatory RNA (sRNAs) and mRNAs to facilitate mRNA translational regulation in response to envelope stress, environmental stress and changes in metabolite concentrations. Also binds with high specificity to tRNAs. The protein is RNA-binding protein Hfq of Alkalilimnicola ehrlichii (strain ATCC BAA-1101 / DSM 17681 / MLHE-1).